The sequence spans 222 residues: Glutathione S-transferase alpha M14 (222 aa).

The residue at position 1 (methionine 1) is an N-acetylmethionine. Alanine 2 carries the post-translational modification N-acetylalanine; in Glutathione S-transferase alpha M14, N-terminally processed. A GST N-terminal domain is found at 3–83 (GKPILHYFNG…YIATKYNLYG (81 aa)). Lysine 4 is modified (N6-succinyllysine). Residues tyrosine 9, 54–55 (QV), and 67–68 (QT) each bind glutathione. The GST C-terminal domain maps to 85–208 (DAKERALIDM…QPGSQRKPPM (124 aa)). Positions 199–222 (QPGSQRKPPMDAKKIRRSQEYFPD) are disordered. Positions 206 to 222 (PPMDAKKIRRSQEYFPD) are enriched in basic and acidic residues.

This sequence belongs to the GST superfamily. Alpha family. Homodimer or heterodimer of GSTA1 and GSTA2.

Its subcellular location is the cytoplasm. It carries out the reaction RX + glutathione = an S-substituted glutathione + a halide anion + H(+). The enzyme catalyses prostaglandin A2 + glutathione = prostaglandin A2-S-(R)-glutathione. The catalysed reaction is prostaglandin J2 + glutathione = prostaglandin J2-S-(R)-glutathione. It catalyses the reaction (13S)-hydroperoxy-(9Z,11E)-octadecadienoate + 2 glutathione = (13S)-hydroxy-(9Z,11E)-octadecadienoate + glutathione disulfide + H2O. It carries out the reaction androst-5-ene-3,17-dione = androst-4-ene-3,17-dione. Its function is as follows. Glutathione S-transferase that catalyzes the nucleophilic attack of the sulfur atom of glutathione on the electrophilic groups of a wide range of exogenous and endogenous compounds. Involved in the formation of glutathione conjugates of both prostaglandin A2 (PGA2) and prostaglandin J2 (PGJ2). It also catalyzes the isomerization of D5-androstene-3,17-dione (AD) into D4-androstene-3,17-dione and may therefore play an important role in hormone biosynthesis. Through its glutathione-dependent peroxidase activity toward the fatty acid hydroperoxide (13S)-hydroperoxy-(9Z,11E)-octadecadienoate/13-HPODE it is also involved in the metabolism of oxidized linoleic acid. This is Glutathione S-transferase alpha M14 from Sus scrofa (Pig).